The chain runs to 508 residues: METPNIISHTNLLSKIDLEKQNPAPIFPTITELKSEARSLFSLAFPTILAALILYARSAISMLFLGHIGELELAGGSLAIAFANITGYSVLAGLALGMDPLCSQAFGAGRPKLLSLTLQRTVLFLLTSSVVIVALWLNLGKIMIYLHQDPSISSLAQTYILCSIPDLLTNSFLHPLRIYLRAQGITSPLTLATLAGTIFHIPMNFFLVSYLGWGFMGVSMAAAASNLLVVIFLVAHVWIAGLHQPTWTRPSSECFKDWGPVVTLAIPSCIGVCLEWWWYEIMTVLCGLLIDPSTPVASMGILIQTTSLLYIFPSSLGLAVSTRVGNELGSNRPNKARLSAIVAVSFAGVMGLTASAFAWGVSDVWGWIFTNDVAIIKLTAAALPILGLCELGNCPQTVGCGVVRGTARPSMAANINLGAFYLVGTPVAVGLTFWAAYGFCGLWVGLLAAQICCAAMMLYVVATTDWEKEAIRARKLTCTEGVDVVITTTQTNGDLSEPLIYVVTVATD.

12 consecutive transmembrane segments (helical) span residues 48-68, 78-98, 122-142, 156-176, 189-209, 222-242, 270-290, 300-320, 341-361, 368-388, 415-437, and 441-463; these read ILAALILYARSAISMLFLGHI, LAIAFANITGYSVLAGLALGM, VLFLLTSSVVIVALWLNLGKI, AQTYILCSIPDLLTNSFLHPL, LTLATLAGTIFHIPMNFFLVS, AAASNLLVVIFLVAHVWIAGL, IGVCLEWWWYEIMTVLCGLLI, GILIQTTSLLYIFPSSLGLAV, IVAVSFAGVMGLTASAFAWGV, IFTNDVAIIKLTAAALPILGL, INLGAFYLVGTPVAVGLTFWAAY, and GLWVGLLAAQICCAAMMLYVVAT.

Belongs to the multi antimicrobial extrusion (MATE) (TC 2.A.66.1) family. Detected in the part of the veins in cotyledons of 6-day-old seedlings and the basal parts of the petioles in older plants. Highly expressed in the vascular tissues of hypocotyl in dark-grown seedlings.

Its subcellular location is the late endosome membrane. May act as a negative regulator of hypocotyl cell elongation in the light. This chain is Protein DETOXIFICATION 52, found in Arabidopsis thaliana (Mouse-ear cress).